Consider the following 3013-residue polypeptide: MSTLPKPQKRNQRNTNRRPQDVKFPGGGQIVGGVYLLPRRGPRLGVRATRKTSERSQPRGRRQPIPKARRQTGRTWAQPGYPWPLYGNEGCGWMGWLLSPRGSRPHWGPNDPRRRSRNLGKVIDTLTCGFADLMGYIPVVGAPLGGVAAALAHGVRAVEDGINYATGNLPGCSFSIFLLALLSCLTTPASAVHYANKSGIYHLTNDCPNSSIVYEAEDFIMHLPGCVPCIKSGNGSSCWLPATLTIAVPNASIPVRGFRRHVDLMVGAAAFCSAMYVGDLCGGIFLVGQLFSFNPRRHWVVQDCNCSIYVGHITGHRMAWDMMMNWSPTATLVLSYVMRIPQVIMDIFTGGHWGILAGILYYSMVANWAKVLCILFLFAGVDATTRTTGAQAARATLGFTGLFQTGAKQNIHLINTNGSWHINRTALNCNDSLNTGFMAALFYLHKFNSTGCPERLSACKSITQFAQGWGPVTYANVSGSSEDRPYCWHYAPRPCGVVSARSVCGPVYCFTPSPVVVGTTDRRGVPTYTWGENESDVFLLESLRPPAGAWYGCTWMNSTGYTKTCGAPPCHIGPPDQFCPTDCFRKHPEATYRKCGSGPWLTPRCLVDYPYRLWHYPCTVNYTIHKVRLFINGLEHRFDAACNWTRGERCELEDRDRIEMSPLLFSTTELAILPCSFTTMPALSTGLVHLHQNIVDIQYLYGLAPALVSWAVRWEYVVLAFLLLADARICACLWMVLLISQVEAALENLIVLNAASAASSQGWIYCLVFICCAWYIKGRVVPGATYAILHLWPLLLLVLALPQRAYAQDREQGASIGVVVIAAITIFTLTPAYKTMLVHFLWWNQYFIARSEALIQQWVPSLRVRGGRDAVILLTCLLHPSLGFDITKMLLALLGPLYLLQVSLLRVPYYVRAHALLRVCILVRRVAGGKYIQAALLKLGAWTGTYIYDHLAPLSTWASDGLRDLAVAVEPVTFSPMEKKIITWGADTAACGDILAGLPVSARLGHLLFLGPADDMKSMGWRLLAPITAYCQQTRGLLGTIVTSLTGRDRNVVEGEIQVLSTATQSFLGTAINGVMWTVYHGAGSKTLAGPKGPVCQMYTNVDQDMVGWPAPPGTRSLTPCTCGASDLYLVTRNADVIPARRRGDTRAGLLSPRPLSTLKGSSGGPLMCPSDHVVGLFRAAVCTRGVAKALDFVPVENMETTMRSPVFTDNSTPPAVPQTYQVGYLHAPTGSGKSTKVPAAYASQGYKVLVLNPSVAATLGFGSYMSTAHGIDPNIRTGVRTITTGGPITYSTYGKFLADGGCSGGAYDIIICDECHSTDPTTVLGIGTVLDQAETAGVRLTVLATATPPGSVTVPHPNITETALPSTGEVPFYGKAIPLECIKGGRHLIFCHSKKKCDELAKQLRTLGLNAVAFYRGVDVSVIPTAGDVVVCATDALMTGYTGDFDSVIDCNVAVTQIVDFSLDPTFSIETTTVPQDAVARSQRRGRTGRGKPGVYRYVSQGERPSGMFDTVVLCEAYDVGCAWYELTPSETTVRLRAYLNTPGLPVCQDHLEFWEGVFTGMTHIDAHFLSQTKQGGENFAYLVAYQATVCARAKAPPPSWDTMWKCLIRLKPMLTGPTPLLYRLGAVQNEIITTHPITKYIMTCMAADLEVITSTWVLAGGIVAALAAYCLTVGSVVICGRIVTSGKPVPLPDREVLYRQFDEMEECSRHIPYLAEGQQIAEQFKQKILGLLQNTAKQAEDLKPAVQSAWPKLEQFWQKHLWNFVSGVQYLAGLSTLPGNPAVASLMSFSAALTSPLSTSTTLLLNILGGWVASQLAPPTASTAFVVSGLAGAAVGSIGLGKVIIDILAGYGAGVSGALVAFKIMSGEAPAVEDMVNLLPALLSPGALVVGVVCAAVLRRHVGPSEGATQWMNRLIAFASRGNHVSPTHYVPETDASRAVTTILSSLTITSLLRRLHEWISGDWSAPCSCSWLKDVWDWVCTVLSDFKTWLRAKLVPTLPGIPFISCQRGFRGVWRGDGVNYTTCSCGANITGHVKNGSMKIVGPKMCSNVWNNRFPINAITTGPSVPVPEPNYHKALWRVSAEDYVEVVRVNDHHYIVGATADNLKCPCQVPAPEFFTEVDGVRLHRFAPPCRPLMRDDITFSVGLSTYVVGSQLPCEPEPDVVILTSMLTDPDHITAETAARRLARGSPPSLASSSASQLSAPSLKATCTTAGKHPDAELIEANLLWRQEVGGNITRVESENKIIVLDSFDPLIAETDDREISVGAECFNPPRPKFPPALPVWARPDYNPPLLQPWKAPDYEPPLVHGCALPPKGLPPVPPPRKKRVVQLDEGSAKRALAELAQTSFPPSTATLSEDSGRETSTLSSDMTPPREEADRASDDGSYSSMPPLEGEPGDPDLSSGSWSTVSEDHDSVVCCSMSYSWTGALITPCAAEEEKLPISPLSNALIRHHNLVYSTTSRSASLRQKKVTFDRVQVVDQHYYDVLKEIKTKASGVSAKLLSVEEACALTPPHSARSKFGYGAKEVRGLASKAVNHINSVWEDLLEDNSTPIPTTIMAKNEVFCVDAQKGGRKPARLIVYPDLGVRVCEKRALYDVTQKLPIAVMGAAYGFQYSPKQRVDYLLKMWRSKKTPMGFSYDTRCFDSTVTERDIRTEEDIYQCCQLDPVAKKAITSLTERLYCGGPMYNSRGQSCGYRRCRASGVLTTSLGNTLTCYLKAQAACRAAKLKDFDMLVCGDDLVVISESMGVAEDASALRAFTEAMTRYSAPPGDDPQPEYDLELITSCSSNVSVAHDGAGQRYYYLTRDPLTPLSRAAWETARHTPVNSWLGNIIMYAPTIWVRMVLMTHFFAILQSQEILHKALDFDMYGVTYSVTPLDLPYIIQRLHGMAAFSLHGYSPGELNRVASCLRKLGAPPLRAWRHRARAVRAKLIAQGGKHAICGKYLFNWAVRTKLKLTPLRGAANLDLSGWFVSGGSGGDIFHSVSRARPRNLLLCLLLLTVGVGIFLLPAR.

Ser-2 carries the post-translational modification N-acetylserine; by host. Residues 2–23 are interaction with STAT1; the sequence is STLPKPQKRNQRNTNRRPQDVK. Residues 2–58 form an interaction with EIF2AK2/PKR region; that stretch reads STLPKPQKRNQRNTNRRPQDVKFPGGGQIVGGVYLLPRRGPRLGVRATRKTSERSQP. The interaction with DDX3X stretch occupies residues 2-59; it reads STLPKPQKRNQRNTNRRPQDVKFPGGGQIVGGVYLLPRRGPRLGVRATRKTSERSQPR. The segment at 2–75 is disordered; it reads STLPKPQKRN…PKARRQTGRT (74 aa). Residues 2-168 lie on the Cytoplasmic side of the membrane; that stretch reads STLPKPQKRN…EDGINYATGN (167 aa). 2 consecutive short sequence motifs (nuclear localization signal) follow at residues 5–13 and 38–43; these read PKPQKRNQR and PRRGPR. Residues 7 to 16 are compositionally biased toward basic residues; it reads PQKRNQRNTN. The segment covering 32–47 has biased composition (low complexity); sequence GGVYLLPRRGPRLGVR. The residue at position 53 (Ser-53) is a Phosphoserine; by host. 2 short sequence motifs (nuclear localization signal) span residues 58–64 and 66–71; these read PRGRRQP and PKARRQ. Over residues 58–72 the composition is skewed to basic residues; sequence PRGRRQPIPKARRQT. A phosphoserine; by host mark is found at Ser-99 and Ser-116. Residues 112-152 are important for endoplasmic reticulum and mitochondrial localization; that stretch reads PRRRSRNLGKVIDTLTCGFADLMGYIPVVGAPLGGVAAALA. The interaction with APOA2 stretch occupies residues 122–173; that stretch reads VIDTLTCGFADLMGYIPVVGAPLGGVAAALAHGVRAVEDGINYATGNLPGCS. Residues 164-167 form an important for lipid droplets localization region; the sequence is YATG. A helical membrane pass occupies residues 169-189; it reads LPGCSFSIFLLALLSCLTTPA. A propeptide spans 178–191 (ER anchor for the core protein, removed in mature form by host signal peptidase); the sequence is LLALLSCLTTPASA. The Lumenal portion of the chain corresponds to 190-358; it reads SAVHYANKSG…TGGHWGILAG (169 aa). N-linked (GlcNAc...) asparagine; by host glycosylation is found at Asn-196, Asn-209, Asn-234, and Asn-250. The interval 265–296 is important for fusion; sequence MVGAAAFCSAMYVGDLCGGIFLVGQLFSFNPR. Asn-305 carries an N-linked (GlcNAc...) asparagine; by host glycan. Residues 359–379 traverse the membrane as a helical segment; the sequence is ILYYSMVANWAKVLCILFLFA. The Lumenal portion of the chain corresponds to 380-723; that stretch reads GVDATTRTTG…WEYVVLAFLL (344 aa). The HVR1 stretch occupies residues 385-412; that stretch reads TRTTGAQAARATLGFTGLFQTGAKQNIH. Asn-417, Asn-423, and Asn-430 each carry an N-linked (GlcNAc...) (high mannose) asparagine; by host glycan. 4 disulfides stabilise this stretch: Cys-429–Cys-553, Cys-452–Cys-459, Cys-487–Cys-495, and Cys-504–Cys-509. The N-linked (GlcNAc...) asparagine; by host glycan is linked to Asn-448. The segment at 475–479 is HVR2; the sequence is ANVSG. N-linked (GlcNAc...) asparagine; by host glycosylation is present at Asn-476. Residues 481-494 are CD81-binding 1; the sequence is SEDRPYCWHYAPRP. The N-linked (GlcNAc...) asparagine; by host glycan is linked to Asn-533. Residues 545 to 552 form a CD81-binding 2 region; sequence PPAGAWYG. N-linked (GlcNAc...) asparagine; by host glycosylation is present at Asn-557. 4 disulfide bridges follow: Cys-565–Cys-570, Cys-579–Cys-583, Cys-595–Cys-618, and Cys-605–Cys-642. Asn-621 and Asn-643 each carry an N-linked (GlcNAc...) (high mannose) asparagine; by host glycan. Residues Cys-650 and Cys-675 are joined by a disulfide bond. Residues 658–669 are PKR/eIF2-alpha phosphorylation homology domain (PePHD); the sequence is IEMSPLLFSTTE. Residues 724 to 744 form a helical membrane-spanning segment; that stretch reads LADARICACLWMVLLISQVEA. Residues 745–755 are Lumenal-facing; that stretch reads ALENLIVLNAA. Residues 756–776 form a helical membrane-spanning segment; the sequence is SAASSQGWIYCLVFICCAWYI. The Cytoplasmic portion of the chain corresponds to 777–780; that stretch reads KGRV. The chain crosses the membrane as a helical span at residues 781 to 801; it reads VPGATYAILHLWPLLLLVLAL. The Lumenal portion of the chain corresponds to 802 to 811; that stretch reads PQRAYAQDRE. The chain crosses the membrane as a helical span at residues 812 to 832; the sequence is QGASIGVVVIAAITIFTLTPA. Over 833–879 the chain is Cytoplasmic; that stretch reads YKTMLVHFLWWNQYFIARSEALIQQWVPSLRVRGGRDAVILLTCLLH. Residues 880 to 900 traverse the membrane as a helical segment; the sequence is PSLGFDITKMLLALLGPLYLL. At 901–926 the chain is on the lumenal side; that stretch reads QVSLLRVPYYVRAHALLRVCILVRRV. The 124-residue stretch at 901 to 1024 folds into the Peptidase C18 domain; sequence QVSLLRVPYY…DMKSMGWRLL (124 aa). Positions 902-1204 are protease NS2-3; the sequence is VSLLRVPYYV…PVENMETTMR (303 aa). Cys-920 carries the S-palmitoyl cysteine; by host lipid modification. The helical transmembrane segment at 927–947 threads the bilayer; sequence AGGKYIQAALLKLGAWTGTYI. The interval 927–947 is interaction with host SCPS1; that stretch reads AGGKYIQAALLKLGAWTGTYI. Residues 948–1655 lie on the Cytoplasmic side of the membrane; sequence YDHLAPLSTW…CMAADLEVIT (708 aa). Active-site for protease NS2 activity; shared with dimeric partner residues include His-950, Glu-970, and Cys-991. The Peptidase S29 domain occupies 1025 to 1206; it reads APITAYCQQT…ENMETTMRSP (182 aa). Catalysis depends on charge relay system; for serine protease NS3 activity residues His-1081 and Asp-1105. 2 residues coordinate Zn(2+): Cys-1121 and Cys-1123. The active-site Charge relay system; for serine protease NS3 activity is the Ser-1163. 2 residues coordinate Zn(2+): Cys-1169 and His-1173. The Helicase ATP-binding domain occupies 1215-1367; the sequence is PAVPQTYQVG…PNITETALPS (153 aa). Residue 1228–1235 participates in ATP binding; that stretch reads APTGSGKS. Mg(2+) is bound by residues Ser-1235 and Glu-1315. The DECH box signature appears at 1314–1317; it reads DECH. Residues 1374 to 1536 enclose the Helicase C-terminal domain; sequence YGKAIPLECI…ELTPSETTVR (163 aa). The tract at residues 1484–1496 is RNA-binding; sequence QRRGRTGRGKPGV. The chain crosses the membrane as a helical span at residues 1656-1676; that stretch reads STWVLAGGIVAALAAYCLTVG. Residues 1677-1688 are NS3-binding; the sequence is SVVICGRIVTSG. Over 1677–1803 the chain is Cytoplasmic; the sequence is SVVICGRIVT…ALTSPLSTST (127 aa). Residues 1804–1824 form a helical membrane-spanning segment; that stretch reads TLLLNILGGWVASQLAPPTAS. At 1825–1826 the chain is on the lumenal side; it reads TA. Residues 1827–1847 traverse the membrane as a helical segment; the sequence is FVVSGLAGAAVGSIGLGKVII. A topological domain (cytoplasmic) is located at residue Asp-1848. The helical transmembrane segment at 1849 to 1869 threads the bilayer; that stretch reads ILAGYGAGVSGALVAFKIMSG. The Lumenal portion of the chain corresponds to 1870 to 1879; that stretch reads EAPAVEDMVN. Residues 1880-1900 traverse the membrane as a helical segment; it reads LLPALLSPGALVVGVVCAAVL. The Cytoplasmic segment spans residues 1901–1970; that stretch reads RRHVGPSEGA…WISGDWSAPC (70 aa). Residue Cys-1970 is the site of S-palmitoyl cysteine; by host attachment. The stretch at 1971 to 2000 is an intramembrane region; it reads SCSWLKDVWDWVCTVLSDFKTWLRAKLVPT. Residues 2001 to 2992 lie on the Cytoplasmic side of the membrane; it reads LPGIPFISCQ…FHSVSRARPR (992 aa). Cys-2009, Cys-2027, Cys-2029, and Cys-2050 together coordinate Zn(2+). The segment at 2118–2206 is FKBP8-binding; it reads EFFTEVDGVR…ASSSASQLSA (89 aa). A transcriptional activation region spans residues 2118–2331; sequence EFFTEVDGVR…PVPPPRKKRV (214 aa). An interaction with non-structural protein 4A region spans residues 2133-2137; sequence PPCRP. The segment at 2187 to 2440 is interaction with host SKP2; the sequence is RLARGSPPSL…ALITPCAAEE (254 aa). A phosphoserine; by host mark is found at Ser-2192, Ser-2195, Ser-2199, Ser-2202, Ser-2205, and Ser-2208. The ISDR stretch occupies residues 2208–2247; that stretch reads SLKATCTTAGKHPDAELIEANLLWRQEVGGNITRVESENK. Residues 2208-2273 are interaction with EIF2AK2/PKR; it reads SLKATCTTAG…REISVGAECF (66 aa). Residues 2247–2305 form an NS4B-binding region; the sequence is KIIVLDSFDPLIAETDDREISVGAECFNPPRPKFPPALPVWARPDYNPPLLQPWKAPDY. The segment at 2298-2376 is V3; the sequence is QPWKAPDYEP…STLSSDMTPP (79 aa). The segment at 2316–2411 is disordered; that stretch reads PPKGLPPVPP…PDLSSGSWST (96 aa). The SH3-binding signature appears at 2321 to 2324; the sequence is PPVP. The short motif at 2326–2334 is the Nuclear localization signal element; that stretch reads PRKKRVVQL. A compositionally biased stretch (polar residues) spans 2347–2373; the sequence is AQTSFPPSTATLSEDSGRETSTLSSDM. Positions 2375 to 2385 are enriched in basic and acidic residues; the sequence is PPREEADRASD. At Ser-2464 the chain carries Phosphoserine; by host. A RdRp catalytic domain is found at 2636–2754; the sequence is PMGFSYDTRC…ISESMGVAED (119 aa). Residues Asp-2642, Asp-2740, and Asp-2741 each coordinate Mg(2+). Residues 2993–3013 form a helical membrane-spanning segment; the sequence is NLLLCLLLLTVGVGIFLLPAR.

Belongs to the hepacivirus polyprotein family. Homooligomer. Interacts with E1 (via C-terminus). Interacts with the non-structural protein 5A. Interacts (via N-terminus) with host STAT1 (via SH2 domain); this interaction results in decreased STAT1 phosphorylation and ubiquitin-mediated proteasome-dependent STAT1 degradation, leading to decreased IFN-stimulated gene transcription. Interacts with host STAT3; this interaction constitutively activates STAT3. Interacts with host LTBR receptor. Interacts with host TNFRSF1A receptor and possibly induces apoptosis. Interacts with host HNRPK. Interacts with host YWHAE. Interacts with host UBE3A/E6AP. Interacts with host DDX3X. Interacts with host APOA2. Interacts with host RXRA protein. Interacts with host SP110 isoform 3/Sp110b; this interaction sequesters the transcriptional corepressor SP110 away from the nucleus. Interacts with host CREB3 nuclear transcription protein; this interaction triggers cell transformation. Interacts with host ACY3. Interacts with host C1QR1. Interacts with host RBM24; this interaction, which enhances the interaction of the mature core protein with 5'-UTR, may inhibit viral translation and favor replication. Interacts with host EIF2AK2/PKR; this interaction induces the autophosphorylation of EIF2AK2. Part of the viral assembly initiation complex composed of NS2, E1, E2, NS3, NS4A, NS5A and the mature core protein. In terms of assembly, forms a heterodimer with envelope glycoprotein E2. Interacts with mature core protein. Interacts with protease NS2. The heterodimer E1/E2 interacts with host CLDN1; this interaction plays a role in viral entry into host cell. Interacts with host SPSB2 (via C-terminus). Part of the viral assembly initiation complex composed of NS2, E1, E2, NS3, NS4A, NS5A and the mature core protein. Interacts with host NEURL3; this interaction prevents E1 binding to glycoprotein E2. As to quaternary structure, forms a heterodimer with envelope glycoprotein E1. Interacts with host CD81 and SCARB1 receptors; these interactions play a role in viral entry into host cell. Interacts with host EIF2AK2/PKR; this interaction inhibits EIF2AK2 and probably allows the virus to evade the innate immune response. Interacts with host CD209/DC-SIGN and CLEC4M/DC-SIGNR. Interact with host SPCS1; this interaction is essential for viral particle assembly. Interacts with protease NS2. The heterodimer E1/E2 interacts with host CLDN1; this interaction plays a role in viral entry into host cell. Part of the viral assembly initiation complex composed of NS2, E1, E2, NS3, NS4A, NS5A and the mature core protein. Interacts with host SLC3A2/4F2hc; the interaction may facilitate viral entry into host cell. Interacts with human PLSCR1. Homohexamer. Homoheptamer. Interacts with protease NS2. In terms of assembly, homodimer. Interacts with host SPCS1; this interaction is essential for viral particle assembly. Interacts with envelope glycoprotein E1. Interacts with envelope glycoprotein E2. Interacts with viroporin p7. Interacts with serine protease/helicase NS3. Part of the replication complex composed of NS2, NS3, NS4A, NS4B, NS5A and the RNA-directed RNA polymerase embedded in an ER-derived membranous web. Part of the viral assembly initiation complex composed of NS2, E1, E2, NS3, NS4A, NS5A and the mature core protein. As to quaternary structure, interacts with protease NS2. Interacts with non-structural protein 4A; this interaction stabilizes the folding of NS3 serine protease. NS3-NS4A interaction is essential for NS3 activation and allows membrane anchorage of the latter. NS3/NS4A complex also prevents phosphorylation of host IRF3, thus preventing the establishment of dsRNA induced antiviral state. Interacts with host MAVS; this interaction leads to the cleavage and inhibition of host MAVS. Interacts with host TICAM1; this interaction leads to the cleavage and inhibition of host TICAM1. Interacts with host TANK-binding kinase/TBK1; this interaction results in the inhibition of the association between TBK1 and IRF3, which leads to the inhibition of IRF3 activation. Interacts with host RBM24. Part of the replication complex composed of NS2, NS3, NS4A, NS4B, NS5A and the RNA-directed RNA polymerase embedded in an ER-derived membranous web. Part of the viral assembly initiation complex composed of NS2, E1, E2, NS3, NS4A, NS5A and the mature core protein. Interacts with NS3 serine protease; this interaction stabilizes the folding of NS3 serine protease. NS3-NS4A interaction is essential for NS3 activation and allows membrane anchorage of the latter. Interacts with non-structural protein 5A (via N-terminus). Part of the replication complex composed of NS2, NS3, NS4A, NS4B, NS5A and the RNA-directed RNA polymerase embedded in an ER-derived membranous web. Part of the viral assembly initiation complex composed of NS2, E1, E2, NS3, NS4A, NS5A and the mature core protein. In terms of assembly, homomultimer. Interacts with non-structural protein NS5A. Interacts with host PLA2G4C; this interaction likely initiates the recruitment of replication complexes to lipid droplets. Interacts with host STING; this interaction disrupts the interaction between STING and TBK1 thereby suppressing the interferon signaling. Part of the replication complex composed of NS2, NS3, NS4A, NS4B, NS5A and the RNA-directed RNA polymerase embedded in an ER-derived membranous web. As to quaternary structure, monomer. Homodimer; dimerization is required for RNA-binding. Interacts with the mature core protein. Interacts (via N-terminus) with non-structural protein 4A. Interacts with non-structural protein 4B. Interacts (via region D2) with RNA-directed RNA polymerase. Part of the viral assembly initiation complex composed of NS2, E1, E2, NS3, NS4A, NS5A and the mature core protein. Part of the replication complex composed of NS2, NS3, NS4A, NS4B, NS5A and the RNA-directed RNA polymerase embedded in an ER-derived membranous web. Interacts with host GRB2. Interacts with host BIN1. Interacts with host PIK3R1. Interacts with host SRCAP. Interacts with host FKBP8. Interacts (via C-terminus) with host VAPB (via MSP domain). Interacts with host EIF2AK2/PKR; this interaction leads to disruption of EIF2AK2 dimerization by NS5A and probably allows the virus to evade the innate immune response. Interacts (via N-terminus) with host PACSIN2 (via N-terminus); this interaction attenuates protein kinase C alpha-mediated phosphorylation of PACSIN2 by disrupting the interaction between PACSIN2 and PRKCA. Interacts (via N-terminus) with host SRC kinase (via SH2 domain). Interacts with most Src-family kinases. Interacts with host IFI27 and SKP2; promotes the ubiquitin-mediated proteasomal degradation of NS5A. Interacts with host GPS2. Interacts with host TNFRSF21; this interaction allows the modulation by the virus of JNK, p38 MAPK, STAT3, and Akt signaling pathways in a DR6-dependent manner. Interacts (via N-terminus) with host CIDEB (via N-terminus); this interaction seems to regulate the association of HCV particles with APOE. Interacts with host CHKA/Choline Kinase-alpha; CHKA bridges host PI4KA and NS5A and potentiates NS5A-stimulated PI4KA activity, which then facilitates the targeting of the ternary complex to the ER for viral replication. Interacts with host SPSB2 (via C-terminus); this interaction targets NS5A for ubiquitination and degradation. Interacts with host RAB18; this interaction may promote the association of NS5A and other replicase components with lipid droplets. Interacts (via region D2) with host PPIA/CYPA; the interaction stimulates RNA-binding ability of NS5A and is dependent on the peptidyl-prolyl cis-trans isomerase activity of PPIA/CYPA. Interacts with host TRIM14; this interaction induces the degradation of NS5A. Homooligomer. Interacts with non-structural protein 5A. Interacts with host VAPB. Interacts with host PRK2/PKN2. Interacts with host HNRNPA1 and SEPT6; these interactions facilitate viral replication. Part of the replication complex composed of NS2, NS3, NS4A, NS4B, NS5A and the RNA-directed RNA polymerase. Requires Zn(2+) as cofactor. Mg(2+) serves as cofactor. Specific enzymatic cleavages in vivo yield mature proteins. The structural proteins, core, E1, E2 and p7 are produced by proteolytic processing by host signal peptidases. The core protein precursor is synthesized as a 23 kDa, which is retained in the ER membrane through the hydrophobic signal peptide. Cleavage by the signal peptidase releases the 21 kDa mature core protein. The cleavage of the core protein precursor occurs between aminoacids 176 and 188 but the exact cleavage site is not known. Some degraded forms of the core protein appear as well during the course of infection. The other proteins (p7, NS2, NS3, NS4A, NS4B, NS5A and NS5B) are cleaved by the viral proteases. Autoprocessing between NS2 and NS3 is mediated by the NS2 cysteine protease catalytic domain and regulated by the NS3 N-terminal domain. Post-translationally, phosphorylated by host PKC and PKA. In terms of processing, ubiquitinated; mediated by UBE3A and leading to core protein subsequent proteasomal degradation. Highly N-glycosylated. Post-translationally, palmitoylation is required for NS2/3 autoprocessing and E2 recruitment to membranes. In terms of processing, palmitoylated. This modification may play a role in its polymerization or in protein-protein interactions. Phosphorylated on serines in a basal form termed p56. p58 is a hyperphosphorylated form of p56. p56 and p58 coexist in the cell in roughly equivalent amounts. Hyperphosphorylation is dependent on the presence of NS4A. Host CSNK1A1/CKI-alpha or RPS6KB1 kinases may be responsible for NS5A phosphorylation. Post-translationally, tyrosine phosphorylation is essential for the interaction with host SRC. In terms of processing, the N-terminus is phosphorylated by host PRK2/PKN2.

The protein resides in the host endoplasmic reticulum membrane. It is found in the host mitochondrion membrane. It localises to the virion. The protein localises to the host cytoplasm. Its subcellular location is the host nucleus. The protein resides in the host lipid droplet. It is found in the virion membrane. It localises to the host mitochondrion. The protein localises to the host cell membrane. Its subcellular location is the host perinuclear region. The catalysed reaction is Hydrolysis of four peptide bonds in the viral precursor polyprotein, commonly with Asp or Glu in the P6 position, Cys or Thr in P1 and Ser or Ala in P1'.. It carries out the reaction a ribonucleoside 5'-triphosphate + H2O = a ribonucleoside 5'-diphosphate + phosphate + H(+). The enzyme catalyses ATP + H2O = ADP + phosphate + H(+). It catalyses the reaction RNA(n) + a ribonucleoside 5'-triphosphate = RNA(n+1) + diphosphate. Its activity is regulated as follows. Inhibited by the antiviral drug hexamethylene amiloride. Inhibition by amantadine appears to be genotype-dependent. Also inhibited by long-alkyl-chain iminosugar derivatives. Activity is up-regulated by PRK2/PKN2-mediated phosphorylation. Its function is as follows. Packages viral RNA to form a viral nucleocapsid, and promotes virion budding. Participates in the viral particle production as a result of its interaction with the non-structural protein 5A. Binds RNA and may function as a RNA chaperone to induce the RNA structural rearrangements taking place during virus replication. Modulates viral translation initiation by interacting with viral IRES and 40S ribosomal subunit. Affects various cell signaling pathways, host immunity and lipid metabolism. Prevents the establishment of cellular antiviral state by blocking the interferon-alpha/beta (IFN-alpha/beta) and IFN-gamma signaling pathways and by blocking the formation of phosphorylated STAT1 and promoting ubiquitin-mediated proteasome-dependent degradation of STAT1. Activates STAT3 leading to cellular transformation. Regulates the activity of cellular genes, including c-myc and c-fos. May repress the promoter of p53, and sequester CREB3 and SP110 isoform 3/Sp110b in the cytoplasm. Represses cell cycle negative regulating factor CDKN1A, thereby interrupting an important check point of normal cell cycle regulation. Targets transcription factors involved in the regulation of inflammatory responses and in the immune response: suppresses TNF-induced NF-kappa-B activation, and activates AP-1. Binds to dendritic cells (DCs) via C1QR1, resulting in down-regulation of T-lymphocytes proliferation. Alters lipid metabolism by interacting with hepatocellular proteins involved in lipid accumulation and storage. Induces up-regulation of FAS promoter activity, and thereby contributes to the increased triglyceride accumulation in hepatocytes (steatosis). In terms of biological role, forms a heterodimer with envelope glycoprotein E2, which mediates virus attachment to the host cell, virion internalization through clathrin-dependent endocytosis and fusion with host membrane. Fusion with the host cell is most likely mediated by both E1 and E2, through conformational rearrangements of the heterodimer required for fusion rather than a classical class II fusion mechanism. E1/E2 heterodimer binds host apolipoproteins such as APOB and ApoE thereby forming a lipo-viro-particle (LVP). APOE associated to the LVP allows the initial virus attachment to cell surface receptors such as the heparan sulfate proteoglycans (HSPGs), syndecan-1 (SDC1), syndecan-1 (SDC2), the low-density lipoprotein receptor (LDLR) and scavenger receptor class B type I (SCARB1). The cholesterol transfer activity of SCARB1 allows E2 exposure and binding of E2 to SCARB1 and the tetraspanin CD81. E1/E2 heterodimer binding on CD81 activates the epithelial growth factor receptor (EGFR) signaling pathway. Diffusion of the complex E1-E2-EGFR-SCARB1-CD81 to the cell lateral membrane allows further interaction with Claudin 1 (CLDN1) and occludin (OCLN) to finally trigger HCV entry. Functionally, forms a heterodimer with envelope glycoprotein E1, which mediates virus attachment to the host cell, virion internalization through clathrin-dependent endocytosis and fusion with host membrane. Fusion with the host cell is most likely mediated by both E1 and E2, through conformational rearrangements of the heterodimer required for fusion rather than a classical class II fusion mechanism. The interaction between envelope glycoprotein E2 and host apolipoprotein E/APOE allows the proper assembly, maturation and infectivity of the viral particles. This interaction is probably promoted via the up-regulation of cellular autophagy by the virus. E1/E2 heterodimer binds host apolipoproteins such as APOB and APOE thereby forming a lipo-viro-particle (LVP). APOE associated to the LVP allows the initial virus attachment to cell surface receptors such as the heparan sulfate proteoglycans (HSPGs), syndecan-1 (SDC1), syndecan-1 (SDC2), the low-density lipoprotein receptor (LDLR) and scavenger receptor class B type I (SCARB1). The cholesterol transfer activity of SCARB1 allows E2 exposure and binding of E2 to SCARB1 and the tetraspanin CD81. E1/E2 heterodimer binding on CD81 activates the epithelial growth factor receptor (EGFR) signaling pathway. Diffusion of the complex E1-E2-EGFR-SCARB1-CD81 to the cell lateral membrane allows further interaction with Claudin 1 (CLDN1) and occludin (OCLN) to finally trigger HCV entry. Inhibits host EIF2AK2/PKR activation, preventing the establishment of an antiviral state. Viral ligand for CD209/DC-SIGN and CLEC4M/DC-SIGNR, which are respectively found on dendritic cells (DCs), and on liver sinusoidal endothelial cells and macrophage-like cells of lymph node sinuses. These interactions allow the capture of circulating HCV particles by these cells and subsequent facilitated transmission to permissive cells such as hepatocytes and lymphocyte subpopulations. The interaction between E2 and host amino acid transporter complex formed by SLC3A2 and SLC7A5/LAT1 may facilitate viral entry into host cell. Ion channel protein that acts as a viroporin and plays an essential role in the assembly, envelopment and secretion of viral particles. Regulates the host cell secretory pathway, which induces the intracellular retention of viral glycoproteins and favors assembly of viral particles. Creates a pore in acidic organelles and releases Ca(2+) and H(+) in the cytoplasm of infected cells, leading to a productive viral infection. High levels of cytoplasmic Ca(2+) may trigger membrane trafficking and transport of viral ER-associated proteins to viroplasms, sites of viral genome replication. This ionic imbalance induces the assembly of the inflammasome complex, which triggers the maturation of pro-IL-1beta into IL-1beta through the action of caspase-1. Targets also host mitochondria and induces mitochondrial depolarization. In addition of its role as a viroporin, acts as a lipid raft adhesion factor. Its function is as follows. Cysteine protease required for the proteolytic auto-cleavage between the non-structural proteins NS2 and NS3. The N-terminus of NS3 is required for the function of NS2 protease (active region NS2-3). Promotes the initiation of viral particle assembly by mediating the interaction between structural and non-structural proteins. In terms of biological role, displays three enzymatic activities: serine protease with a chymotrypsin-like fold, NTPase and RNA helicase. NS3 serine protease, in association with NS4A, is responsible for the cleavages of NS3-NS4A, NS4A-NS4B, NS4B-NS5A and NS5A-NS5B. The NS3/NS4A complex prevents phosphorylation of host IRF3, thus preventing the establishment of dsRNA induced antiviral state. The NS3/NS4A complex induces host amino acid transporter component SLC3A2, thus contributing to HCV propagation. NS3 RNA helicase binds to RNA and unwinds both dsDNA and dsRNA in the 3' to 5' direction, and likely resolves RNA complicated stable secondary structures in the template strand. Binds a single ATP and catalyzes the unzipping of a single base pair of dsRNA. Inhibits host antiviral proteins TBK1 and IRF3 thereby preventing the establishment of an antiviral state. Cleaves host MAVS/CARDIF thereby preventing the establishment of an antiviral state. Cleaves host TICAM1/TRIF, thereby disrupting TLR3 signaling and preventing the establishment of an antiviral state. Functionally, peptide cofactor which forms a non-covalent complex with the N-terminal of NS3 serine protease. The NS3/NS4A complex prevents phosphorylation of host IRF3, thus preventing the establishment of dsRNA induced antiviral state. The NS3/NS4A complex induces host amino acid transporter component SLC3A2, thus contributing to HCV propagation. Induces a specific membrane alteration that serves as a scaffold for the virus replication complex. This membrane alteration gives rise to the so-called ER-derived membranous web that contains the replication complex. NS4B self-interaction contributes to its function in membranous web formation. Promotes host TRIF protein degradation in a CASP8-dependent manner thereby inhibiting host TLR3-mediated interferon signaling. Disrupts the interaction between STING and TBK1 contributing to the inhibition of interferon signaling. Its function is as follows. Phosphorylated protein that is indispensable for viral replication and assembly. Both hypo- and hyperphosphorylated states are required for the viral life cycle. The hyperphosphorylated form of NS5A is an inhibitor of viral replication. Involved in RNA-binding and especially in binding to the viral genome. Zinc is essential for RNA-binding. Participates in the viral particle production as a result of its interaction with the mature viral core protein. Its interaction with host VAPB may target the viral replication complex to vesicles. Down-regulates viral IRES translation initiation. Mediates interferon resistance, presumably by interacting with and inhibiting host EIF2AK2/PKR. Prevents BIN1-induced apoptosis. Acts as a transcriptional activator of some host genes important for viral replication when localized in the nucleus. Via the interaction with host PACSIN2, modulates lipid droplet formation in order to promote virion assembly. Modulates TNFRSF21/DR6 signaling pathway for viral propagation. In terms of biological role, RNA-dependent RNA polymerase that performs primer-template recognition and RNA synthesis during viral replication. Initiates RNA transcription/replication at a flavin adenine dinucleotide (FAD), resulting in a 5'- FAD cap on viral RNAs. In this way, recognition of viral 5' RNA by host pattern recognition receptors can be bypassed, thereby evading activation of antiviral pathways. This is Genome polyprotein from Hepatitis C virus genotype 6d (isolate VN235) (HCV).